The primary structure comprises 1025 residues: Multidrug resistance protein MdtC (1025 aa).

The next 12 helical transmembrane spans lie at 3 to 23 (FFAL…AITL), 333 to 353 (EVEQ…FLFL), 360 to 380 (IIPA…MYLC), 387 to 407 (LSLM…IVVL), 431 to 451 (VGFT…PLLL), 463 to 483 (FAVT…TLTP), 528 to 548 (LVGV…ISIP), 853 to 873 (VILI…LYES), 875 to 895 (VHPL…LLAL), 897 to 917 (LFNA…IGIV), 953 to 973 (PIMM…LSGG), and 984 to 1004 (ITIV…TPVV).

It belongs to the resistance-nodulation-cell division (RND) (TC 2.A.6) family. MdtC subfamily. As to quaternary structure, part of a tripartite efflux system composed of MdtA, MdtB and MdtC. MdtC forms a heteromultimer with MdtB.

It localises to the cell inner membrane. The MdtABC tripartite complex confers resistance against novobiocin and deoxycholate. The sequence is that of Multidrug resistance protein MdtC from Escherichia coli (strain K12 / MC4100 / BW2952).